The sequence spans 566 residues: Folate-like transporter DDB_G0272544 (566 aa).

Positions Arg-24 to Asn-81 form a coiled coil. Residues Asn-25–Arg-46 are disordered. Positions Asp-27 to Glu-40 are enriched in acidic residues. 11 helical membrane passes run Val-148–Ile-168, Val-171–Leu-191, Ile-194–Leu-214, Val-226–Glu-246, Val-252–Phe-272, Ile-304–Phe-324, Ser-332–Pro-352, Gly-364–Gly-384, Val-388–Val-408, Ile-420–Ser-440, and Tyr-458–Leu-478. Positions Tyr-517–Asn-544 form a coiled coil. Residues Asn-526–Asn-556 are compositionally biased toward low complexity. The disordered stretch occupies residues Asn-526–Lys-566.

It belongs to the reduced folate carrier (RFC) transporter (TC 2.A.48) family.

Its subcellular location is the membrane. In terms of biological role, folate transporter. The chain is Folate-like transporter DDB_G0272544 from Dictyostelium discoideum (Social amoeba).